Reading from the N-terminus, the 461-residue chain is 3-deoxy-D-manno-octulosonic acid transferase (461 aa).

Residues 2–22 (MLLYYTLSFILLPVYFIIIFI) form a helical; Signal-anchor membrane-spanning segment. Residues 47 to 88 (SALDFIQMSVNKEGFTDHKTTSYVDMHRNASLMYKLSLERSY) form the RPE1 insert domain. The active-site Proton acceptor is the glutamate 102. Residues 306 to 307 (PR), 347 to 349 (FGE), and 372 to 375 (NILE) each bind CMP.

Belongs to the glycosyltransferase group 1 family. Glycosyltransferase 30 subfamily.

The protein localises to the cell inner membrane. The enzyme catalyses lipid IVA (E. coli) + CMP-3-deoxy-beta-D-manno-octulosonate = alpha-Kdo-(2-&gt;6)-lipid IVA (E. coli) + CMP + H(+). It functions in the pathway bacterial outer membrane biogenesis; LPS core biosynthesis. In terms of biological role, involved in lipopolysaccharide (LPS) biosynthesis. Catalyzes the transfer of 3-deoxy-D-manno-octulosonate (Kdo) residue(s) from CMP-Kdo to lipid IV(A), the tetraacyldisaccharide-1,4'-bisphosphate precursor of lipid A. In Rickettsia prowazekii (strain Madrid E), this protein is 3-deoxy-D-manno-octulosonic acid transferase (waaA).